Consider the following 227-residue polypeptide: Thiamine-phosphate synthase (227 aa).

4-amino-2-methyl-5-(diphosphooxymethyl)pyrimidine is bound by residues 50-54 and Asp-82; that span reads QFRQK. Residues Asp-83 and Asp-102 each contribute to the Mg(2+) site. Thr-121 contributes to the 4-amino-2-methyl-5-(diphosphooxymethyl)pyrimidine binding site. 147–149 provides a ligand contact to 2-[(2R,5Z)-2-carboxy-4-methylthiazol-5(2H)-ylidene]ethyl phosphate; that stretch reads TTS. Lys-150 lines the 4-amino-2-methyl-5-(diphosphooxymethyl)pyrimidine pocket. 2-[(2R,5Z)-2-carboxy-4-methylthiazol-5(2H)-ylidene]ethyl phosphate-binding positions include Gly-178 and 198 to 199; that span reads LS.

Belongs to the thiamine-phosphate synthase family. Mg(2+) is required as a cofactor.

The catalysed reaction is 2-[(2R,5Z)-2-carboxy-4-methylthiazol-5(2H)-ylidene]ethyl phosphate + 4-amino-2-methyl-5-(diphosphooxymethyl)pyrimidine + 2 H(+) = thiamine phosphate + CO2 + diphosphate. It carries out the reaction 2-(2-carboxy-4-methylthiazol-5-yl)ethyl phosphate + 4-amino-2-methyl-5-(diphosphooxymethyl)pyrimidine + 2 H(+) = thiamine phosphate + CO2 + diphosphate. The enzyme catalyses 4-methyl-5-(2-phosphooxyethyl)-thiazole + 4-amino-2-methyl-5-(diphosphooxymethyl)pyrimidine + H(+) = thiamine phosphate + diphosphate. Its pathway is cofactor biosynthesis; thiamine diphosphate biosynthesis; thiamine phosphate from 4-amino-2-methyl-5-diphosphomethylpyrimidine and 4-methyl-5-(2-phosphoethyl)-thiazole: step 1/1. Functionally, condenses 4-methyl-5-(beta-hydroxyethyl)thiazole monophosphate (THZ-P) and 2-methyl-4-amino-5-hydroxymethyl pyrimidine pyrophosphate (HMP-PP) to form thiamine monophosphate (TMP). The chain is Thiamine-phosphate synthase from Salinibacter ruber (strain DSM 13855 / M31).